The sequence spans 432 residues: DNA damage-binding protein 2 (432 aa).

Positions 1-31 are disordered; that stretch reads MAPKKCPETQKSPDVAVLLRSKSRRGPQELE. Residues lysine 35 and lysine 77 each carry the N6-acetyllysine modification. Required for interaction with DDB1 regions lie at residues 68-79 and 87-98; these read SIVRDLYQHKLG and QQGLQKSFLHSL. WD repeat units lie at residues 116–151, 159–194, 203–238, 244–287, and 290–329; these read SLAWHPTHPSTLAVGSKGGDIMIWNFGIKDKPIFLK, ITGLKFNHLNTNQFFASSMEGTTRLQDFKGNILRVY, WFCSLDVSAKSRVVVTGDNMGHVILLSTDGKELWNL, KVAH…SLPH, and PVNAACFSPDGARLLTTDQNNEIRVYSASQWDSPLNLISH. Residues 256–274 carry the DWD box motif; it reads WLLATASIDQTVKIWDLRQ. Positions 334-336 are photolesion recognition; it reads FQH. 2 WD repeats span residues 343–386 and 396–420; these read TWHS…MCQL and SLNEFNPMGDTLASTMGYHILIWSQ.

This sequence belongs to the WD repeat DDB2/WDR76 family. In terms of assembly, component of the UV-DDB complex which includes DDB1 and DDB2. The UV-DDB complex interacts with monoubiquitinated histone H2A and binds to XPC via the DDB2 subunit. Component of the DCX (DDB1-CUL4-X-box) E3 ubiquitin-protein ligase complex DDB1-CUL4-ROC1 (also known as CUL4-DDB-ROC1 and CUL4-DDB-RBX1), which includes CUL4A or CUL4B, DDB1, DDB2 and RBX1. DDB2 may function as the substrate recognition module within this complex. The DDB1-CUL4-ROC1 complex may associate with the COP9 signalosome, and this inhibits the E3 ubiquitin-protein ligase activity of the complex. A large number of other DCX complexes may also exist in which an alternate substrate targeting subunit replaces DDB2. These targeting subunits are generally known as DCAF (DDB1- and CUL4-associated factor) or CDW (CUL4-DDB1-associated WD40-repeat) proteins. Post-translationally, phosphorylation by ABL1 negatively regulate UV-DDB activity. In terms of processing, ubiquitinated by CUL4A in response to UV irradiation. Ubiquitination appears to both impair DNA-binding and promotes ubiquitin-dependent proteolysis. Degradation of DDB2 at sites of DNA damage may be a prerequisite for their recognition by XPC and subsequent repair. CUL4A-mediated degradation appears to be promoted by ABL1. Ubiquitinated, leading to proteasomal degradation, and deubiquitinated by USP24. Deubiquitinated by USP44; leading to its stabilization on DNA lesions. Post-translationally, acetylated. Deacetylation by SIRT6 in response to UV stress facilitates nucleotide excision repair pathway (the NER pathway) transduction. As to expression, expressed in bone marrow, liver, lung, muscle, pancreas and spleen.

It localises to the nucleus. It is found in the chromosome. It functions in the pathway protein modification; protein ubiquitination. Protein, which is both involved in DNA repair and protein ubiquitination, as part of the UV-DDB complex and DCX (DDB1-CUL4-X-box) complexes, respectively. Core component of the UV-DDB complex (UV-damaged DNA-binding protein complex), a complex that recognizes UV-induced DNA damage and recruit proteins of the nucleotide excision repair pathway (the NER pathway) to initiate DNA repair. The UV-DDB complex preferentially binds to cyclobutane pyrimidine dimers (CPD), 6-4 photoproducts (6-4 PP), apurinic sites and short mismatches. Also functions as the substrate recognition module for the DCX (DDB2-CUL4-X-box) E3 ubiquitin-protein ligase complex DDB2-CUL4-ROC1 (also known as CUL4-DDB-ROC1 and CUL4-DDB-RBX1). The DDB2-CUL4-ROC1 complex may ubiquitinate histone H2A, histone H3 and histone H4 at sites of UV-induced DNA damage. The ubiquitination of histones may facilitate their removal from the nucleosome and promote subsequent DNA repair. The DDB2-CUL4-ROC1 complex also ubiquitinates XPC, which may enhance DNA-binding by XPC and promote NER. The DDB2-CUL4-ROC1 complex also ubiquitinates KAT7/HBO1 in response to DNA damage, leading to its degradation: recognizes KAT7/HBO1 following phosphorylation by ATR. This is DNA damage-binding protein 2 (Ddb2) from Mus musculus (Mouse).